A 406-amino-acid polypeptide reads, in one-letter code: Multifunctional CCA protein (406 aa).

ATP is bound by residues Gly-8 and Arg-11. CTP contacts are provided by Gly-8 and Arg-11. Asp-21 and Asp-23 together coordinate Mg(2+). Positions 91, 138, and 141 each coordinate ATP. Positions 91, 138, and 141 each coordinate CTP. In terms of domain architecture, HD spans 229–331 (TGIHQEMVSD…LELLGRCDAL (103 aa)).

The protein belongs to the tRNA nucleotidyltransferase/poly(A) polymerase family. Bacterial CCA-adding enzyme type 1 subfamily. As to quaternary structure, monomer. Can also form homodimers and oligomers. The cofactor is Mg(2+). Ni(2+) serves as cofactor.

It carries out the reaction a tRNA precursor + 2 CTP + ATP = a tRNA with a 3' CCA end + 3 diphosphate. The enzyme catalyses a tRNA with a 3' CCA end + 2 CTP + ATP = a tRNA with a 3' CCACCA end + 3 diphosphate. In terms of biological role, catalyzes the addition and repair of the essential 3'-terminal CCA sequence in tRNAs without using a nucleic acid template. Adds these three nucleotides in the order of C, C, and A to the tRNA nucleotide-73, using CTP and ATP as substrates and producing inorganic pyrophosphate. tRNA 3'-terminal CCA addition is required both for tRNA processing and repair. Also involved in tRNA surveillance by mediating tandem CCA addition to generate a CCACCA at the 3' terminus of unstable tRNAs. While stable tRNAs receive only 3'-terminal CCA, unstable tRNAs are marked with CCACCA and rapidly degraded. This Stenotrophomonas maltophilia (strain R551-3) protein is Multifunctional CCA protein.